Consider the following 63-residue polypeptide: Large ribosomal subunit protein eL37 (63 aa).

Zn(2+)-binding residues include Cys20, Cys23, Cys35, and Cys38. The segment at 20–38 (CRRCGRHSFNVRKGYCVAC) adopts a C4-type zinc-finger fold.

It belongs to the eukaryotic ribosomal protein eL37 family. It depends on Zn(2+) as a cofactor.

Functionally, binds to the 23S rRNA. The chain is Large ribosomal subunit protein eL37 from Ignicoccus hospitalis (strain KIN4/I / DSM 18386 / JCM 14125).